Reading from the N-terminus, the 174-residue chain is MKTFLPGLMSASRKLSAWIGLYALLVLLALYLASCSAASHAPLKQSASDPAHSHRMTLSDHEFAPVDFEPQPGDTITIRNRSDISHSIYVTYPDGTMVNLGVQTPGTTVHWQVPADAKGEFVLQCWIHPIIRANLLVNAANLSSSAFKSALPKFTRQEILDGRQNICSSRNRRA.

It functions in the pathway one-carbon metabolism; methylamine degradation. Its function is as follows. Probably involved in TTQ prosthetic group biosynthesis. The sequence is that of Methylamine utilization protein MauL (mauL) from Methylophilus methylotrophus (Bacterium W3A1).